The following is a 601-amino-acid chain: DNA topoisomerase I, mitochondrial (601 aa).

A mitochondrion-targeting transit peptide spans 1-50 (MRVVRLLRLRAALTLLGEVPRRPASRGVPGSRRTQKGSGARWEKEKHEDG). The segment at 22-48 (RPASRGVPGSRRTQKGSGARWEKEKHE) is disordered. Interaction with DNA regions lie at residues 261 to 262 (KY), 324 to 329 (RAGNEK), and 421 to 423 (TAK). The region spanning 268–601 (CSKLKGETAW…LAMAGEDFEF (334 aa)) is the Topo IB-type catalytic domain. The active-site O-(3'-phospho-DNA)-tyrosine intermediate is the Tyr559.

This sequence belongs to the type IB topoisomerase family. Ca(2+) is required as a cofactor. The cofactor is Mg(2+).

The protein resides in the mitochondrion. It carries out the reaction ATP-independent breakage of single-stranded DNA, followed by passage and rejoining.. Its function is as follows. Releases the supercoiling and torsional tension of DNA introduced during duplication of mitochondrial DNA by transiently cleaving and rejoining one strand of the DNA duplex. Introduces a single-strand break via transesterification at a target site in duplex DNA. The scissile phosphodiester is attacked by the catalytic tyrosine of the enzyme, resulting in the formation of a DNA-(3'-phosphotyrosyl)-enzyme intermediate and the expulsion of a 5'-OH DNA strand. The free DNA strand then rotates around the intact phosphodiester bond on the opposing strand, thus removing DNA supercoils. Finally, in the religation step, the DNA 5'-OH attacks the covalent intermediate to expel the active-site tyrosine and restore the DNA phosphodiester backbone. The polypeptide is DNA topoisomerase I, mitochondrial (TOP1MT) (Pan troglodytes (Chimpanzee)).